Reading from the N-terminus, the 161-residue chain is Endoribonuclease YbeY (161 aa).

Residues His-121, His-125, and His-131 each coordinate Zn(2+).

This sequence belongs to the endoribonuclease YbeY family. It depends on Zn(2+) as a cofactor.

The protein localises to the cytoplasm. Functionally, single strand-specific metallo-endoribonuclease involved in late-stage 70S ribosome quality control and in maturation of the 3' terminus of the 16S rRNA. In Xylella fastidiosa (strain 9a5c), this protein is Endoribonuclease YbeY.